The sequence spans 248 residues: Coproheme decarboxylase (248 aa).

Residues arginine 130, 144 to 148 (YPMDK), histidine 171, glutamine 184, and serine 222 each bind Fe-coproporphyrin III. Tyrosine 144 is an active-site residue.

It belongs to the ChdC family. Type 1 subfamily. The cofactor is Fe-coproporphyrin III.

It catalyses the reaction Fe-coproporphyrin III + 2 H2O2 + 2 H(+) = heme b + 2 CO2 + 4 H2O. The catalysed reaction is Fe-coproporphyrin III + H2O2 + H(+) = harderoheme III + CO2 + 2 H2O. It carries out the reaction harderoheme III + H2O2 + H(+) = heme b + CO2 + 2 H2O. Its pathway is porphyrin-containing compound metabolism; protoheme biosynthesis. Its function is as follows. Involved in coproporphyrin-dependent heme b biosynthesis. Catalyzes the decarboxylation of Fe-coproporphyrin III (coproheme) to heme b (protoheme IX), the last step of the pathway. The reaction occurs in a stepwise manner with a three-propionate intermediate. This Geobacillus thermodenitrificans (strain NG80-2) protein is Coproheme decarboxylase.